Here is a 1139-residue protein sequence, read N- to C-terminus: Ras GTPase-activating protein nGAP (1139 aa).

The disordered stretch occupies residues 1-87; the sequence is MQTPEVPAER…SRGLPKLKES (87 aa). Phosphoserine is present on serine 16. The span at 17 to 36 shows a compositional bias: polar residues; that stretch reads ISGTSTSEKPNSMDTANTSP. The 118-residue stretch at 41–158 folds into the PH domain; sequence GFFSKRLKGS…WMENLRRTVQ (118 aa). Basic residues predominate over residues 45–56; that stretch reads KRLKGSIKRTKS. Positions 73–87 are enriched in basic and acidic residues; it reads STDDRSRGLPKLKES. Residue serine 89 is modified to Phosphoserine. Positions 149-267 constitute a C2 domain; sequence WMENLRRTVQ…TGRQFVEKWY (119 aa). In terms of domain architecture, Ras-GAP spans 343 to 551; that stretch reads GRAKDFLTDL…GGMKRFLLEI (209 aa). Threonine 620 is subject to Phosphothreonine. A Phosphoserine modification is found at serine 663. Disordered stretches follow at residues 684 to 704, 751 to 782, 803 to 869, 910 to 953, and 1116 to 1139; these read ASSQSMTYSEKDERESSLPNG, ETQSTPQSAPQVRRPLHPALNQPGGLQPLSFQ, SLEN…GQAQ, EPVQ…SATM, and NGISPTNPTKLSITENGEFKNSSC. 2 stretches are compositionally biased toward polar residues: residues 751-760 and 803-818; these read ETQSTPQSAP and SLENLSTASSRSQSNS. Residues 833–855 show a composition bias toward basic and acidic residues; it reads DFTKRSTQSEDFSRRHTVPDRHI. The residue at position 864 (serine 864) is a Phosphoserine. The span at 916-928 shows a compositional bias: low complexity; it reads SRSRQQSSSSRES.

In terms of assembly, interacts with PEAK1.

Functionally, inhibitory regulator of the Ras-cyclic AMP pathway. The sequence is that of Ras GTPase-activating protein nGAP (RASAL2) from Homo sapiens (Human).